The primary structure comprises 101 residues: Small ribosomal subunit protein uS14 (101 aa).

This sequence belongs to the universal ribosomal protein uS14 family. Part of the 30S ribosomal subunit. Contacts proteins S3 and S10.

Its function is as follows. Binds 16S rRNA, required for the assembly of 30S particles and may also be responsible for determining the conformation of the 16S rRNA at the A site. This chain is Small ribosomal subunit protein uS14, found in Polynucleobacter asymbioticus (strain DSM 18221 / CIP 109841 / QLW-P1DMWA-1) (Polynucleobacter necessarius subsp. asymbioticus).